The primary structure comprises 114 residues: Superoxide dismutase [Cu-Zn] (114 aa).

Residues histidine 37, histidine 39, and histidine 54 each coordinate Cu cation. Positions 48–76 are disordered; that stretch reads CMSSGPHFNPRSKEHGAPTDENRHLGDLG. The Zn(2+) site is built by histidine 54, histidine 62, histidine 71, and aspartate 74. Positions 58–73 are enriched in basic and acidic residues; the sequence is RSKEHGAPTDENRHLG. Cu cation is bound at residue histidine 111.

The protein belongs to the Cu-Zn superoxide dismutase family. Homodimer. Requires Cu cation as cofactor. The cofactor is Zn(2+).

Its subcellular location is the cytoplasm. The enzyme catalyses 2 superoxide + 2 H(+) = H2O2 + O2. Destroys radicals which are normally produced within the cells and which are toxic to biological systems. The sequence is that of Superoxide dismutase [Cu-Zn] from Drosophila obscura (Fruit fly).